The chain runs to 240 residues: Uridylate kinase (240 aa).

13-16 (KLSG) contributes to the ATP binding site. The interval 21 to 26 (GDKGFG) is involved in allosteric activation by GTP. Residue Gly-55 participates in UMP binding. 2 residues coordinate ATP: Gly-56 and Arg-60. Residues Asp-75 and 136–143 (IGNPYFST) each bind UMP. Residues Asn-164, Tyr-170, and Asp-173 each coordinate ATP.

It belongs to the UMP kinase family. Homohexamer.

The protein localises to the cytoplasm. It catalyses the reaction UMP + ATP = UDP + ADP. The protein operates within pyrimidine metabolism; CTP biosynthesis via de novo pathway; UDP from UMP (UMPK route): step 1/1. With respect to regulation, allosterically activated by GTP. Inhibited by UTP. Its function is as follows. Catalyzes the reversible phosphorylation of UMP to UDP. This is Uridylate kinase from Staphylococcus haemolyticus (strain JCSC1435).